Consider the following 354-residue polypeptide: Uroporphyrinogen decarboxylase (354 aa).

Substrate is bound by residues 27–31 (RQAGR), Asp77, Tyr154, Thr209, and His327.

It belongs to the uroporphyrinogen decarboxylase family. Homodimer.

It is found in the cytoplasm. The catalysed reaction is uroporphyrinogen III + 4 H(+) = coproporphyrinogen III + 4 CO2. It participates in porphyrin-containing compound metabolism; protoporphyrin-IX biosynthesis; coproporphyrinogen-III from 5-aminolevulinate: step 4/4. Functionally, catalyzes the decarboxylation of four acetate groups of uroporphyrinogen-III to yield coproporphyrinogen-III. In Citrobacter koseri (strain ATCC BAA-895 / CDC 4225-83 / SGSC4696), this protein is Uroporphyrinogen decarboxylase.